A 132-amino-acid polypeptide reads, in one-letter code: Small ribosomal subunit protein uS8 (132 aa).

This sequence belongs to the universal ribosomal protein uS8 family. In terms of assembly, part of the 30S ribosomal subunit. Contacts proteins S5 and S12.

One of the primary rRNA binding proteins, it binds directly to 16S rRNA central domain where it helps coordinate assembly of the platform of the 30S subunit. This chain is Small ribosomal subunit protein uS8, found in Afipia carboxidovorans (strain ATCC 49405 / DSM 1227 / KCTC 32145 / OM5) (Oligotropha carboxidovorans).